The following is a 428-amino-acid chain: MKLLIKNGHVLDVKTGLDRVTDILAVDGIIHEVGSKIDEAGCEVIDATGLYVTPGLVDAHCHLRDPGYEYKEDIESGTRSAAKGGFTSVACMPNTNPVLDNEAMVKYVINKAKTDGFLNVFPIGALSKGLKGEELSEIGELKFAGAVALSDDGRPVGNSSLMKKAMQYASMFDITIISHCEDLDLVDEGLMNEGYQSSILGLKGNPAPAEEVMIARDLILAEYTKATIHIAHVSTELGVDLIRNAKRRGVKVTAETCPHYFTLTDNACEGFNTNAKVNPPLRTQKDVDAIIQGLKDGTIDIISTDHAPHHIDEKNVEFKIAANGMVGFETAFPLAVTYLVKPGHLSLKELVYKMSFNPSQMLGLNKGTIEVGKLADLIIFDLNEEYKVNITEFESKSKNSPFNGLLLYGQPQYTIVGGTPVVRKKVLL.

Residues His-60 and His-62 each contribute to the Zn(2+) site. Residues 62-64 and Asn-94 contribute to the substrate site; that span reads HLR. Asp-152, His-179, and His-232 together coordinate Zn(2+). Asn-278 serves as a coordination point for substrate. Asp-305 serves as a coordination point for Zn(2+). The active site involves Asp-305. His-309 contacts substrate.

The protein belongs to the metallo-dependent hydrolases superfamily. DHOase family. Class I DHOase subfamily. The cofactor is Zn(2+).

It catalyses the reaction (S)-dihydroorotate + H2O = N-carbamoyl-L-aspartate + H(+). Its pathway is pyrimidine metabolism; UMP biosynthesis via de novo pathway; (S)-dihydroorotate from bicarbonate: step 3/3. Functionally, catalyzes the reversible cyclization of carbamoyl aspartate to dihydroorotate. The sequence is that of Dihydroorotase from Ruminiclostridium cellulolyticum (strain ATCC 35319 / DSM 5812 / JCM 6584 / H10) (Clostridium cellulolyticum).